The chain runs to 379 residues: Succinyl-diaminopimelate desuccinylase (379 aa).

H70 contributes to the Zn(2+) binding site. The active site involves D72. D103 is a binding site for Zn(2+). Residue E137 is the Proton acceptor of the active site. Zn(2+) is bound by residues E138, E166, and H352.

It belongs to the peptidase M20A family. DapE subfamily. In terms of assembly, homodimer. Zn(2+) serves as cofactor. It depends on Co(2+) as a cofactor.

It catalyses the reaction N-succinyl-(2S,6S)-2,6-diaminopimelate + H2O = (2S,6S)-2,6-diaminopimelate + succinate. It functions in the pathway amino-acid biosynthesis; L-lysine biosynthesis via DAP pathway; LL-2,6-diaminopimelate from (S)-tetrahydrodipicolinate (succinylase route): step 3/3. In terms of biological role, catalyzes the hydrolysis of N-succinyl-L,L-diaminopimelic acid (SDAP), forming succinate and LL-2,6-diaminopimelate (DAP), an intermediate involved in the bacterial biosynthesis of lysine and meso-diaminopimelic acid, an essential component of bacterial cell walls. This is Succinyl-diaminopimelate desuccinylase from Shewanella baltica (strain OS195).